A 92-amino-acid polypeptide reads, in one-letter code: LYR motif-containing protein 4 homolog (92 aa).

Residues 40–68 (ANKAIRDFAEIDRQMEAGKQNLELIRRQV) are a coiled coil.

The protein belongs to the complex I LYR family. Component of the mitochondrial core iron-sulfur cluster (ISC) assembly complex at least composed of the cysteine desulfurase Nfs1, the scaffold protein IscU, the accessory protein bcn92/Isd11/Lyrm4, and probably fh/frataxin. Interacts with Nfs1.

The protein localises to the mitochondrion. Stabilizing factor of the core iron-sulfur cluster (ISC) assembly complex that regulates the stability and cysteine desulfurase activity of Nfs1 and participates in the [2Fe-2S] clusters assembly on the scaffolding protein IscU. The sequence is that of LYR motif-containing protein 4 homolog from Drosophila subobscura (Fruit fly).